The chain runs to 103 residues: Small ribosomal subunit protein uS14c (103 aa).

The tract at residues 26–56 (SSKKKIRSKVSPLSLSEKTKMQEKLQSLPRN) is disordered.

This sequence belongs to the universal ribosomal protein uS14 family. In terms of assembly, part of the 30S ribosomal subunit.

It localises to the plastid. The protein resides in the chloroplast. Its function is as follows. Binds 16S rRNA, required for the assembly of 30S particles. The chain is Small ribosomal subunit protein uS14c from Saccharum officinarum (Sugarcane).